The chain runs to 509 residues: Poly(A) RNA polymerase GLD2-B (509 aa).

The disordered stretch occupies residues 88-125 (PGSPPSSFQNRKRRSDEGNSPYDVKRQRFQSPQEQTVN). Polar residues predominate over residues 116 to 125 (FQSPQEQTVN). 2 residues coordinate Mg(2+): D240 and D242. The region spanning 409–462 (LGDLLLGFLKYFAVEFDWSKDIISLREAKALPRTDDYEWRNKYICVEEPFDGSN) is the PAP-associated domain.

It belongs to the DNA polymerase type-B-like family. GLD2 subfamily. As to quaternary structure, component of a complex at least composed of cpeb1, cpsf1, tent2/gld2, pabpc1/ePAB, parn and sympk. Following oocyte maturation, parn is expelled from the complex. Interacts with rbfox2. Interacts with sympk. Requires Mg(2+) as cofactor. The cofactor is Mn(2+).

Its subcellular location is the cytoplasm. It catalyses the reaction RNA(n) + ATP = RNA(n)-3'-adenine ribonucleotide + diphosphate. Functionally, cytoplasmic poly(A) RNA polymerase that adds successive AMP monomers to the 3'-end of specific RNAs, forming a poly(A) tail. In contrast to the canonical nuclear poly(A) RNA polymerase, it only adds poly(A) to selected cytoplasmic mRNAs during oocyte maturation. Plays a central role during oocyte maturation by mediating polyadenylation of dormant mRNAs, which contain 5'AAUAAA-3' sequence in their 3'-UTR. In immature oocytes, polyadenylation of poly(A) tails is counteracted by the ribonuclease parn. During maturation parn is excluded from the ribonucleoprotein complex, allowing poly(A) elongation and activation of mRNAs. May not play a role in replication-dependent histone mRNA degradation. The polypeptide is Poly(A) RNA polymerase GLD2-B (Xenopus laevis (African clawed frog)).